We begin with the raw amino-acid sequence, 322 residues long: Probable uridine nucleosidase 2 (322 aa).

Active-site residues include D14 and H246.

This sequence belongs to the IUNH family. In terms of assembly, component of the NSH heterocomplex made of URH1/NSH1 and URH2/NSH2 which exhibits strong xanthosine nucleosidase activity. Interacts with URH1. Expressed in roots, seedlings and flowers.

It is found in the cytoplasm. It localises to the cytosol. It carries out the reaction uridine + H2O = D-ribose + uracil. It catalyses the reaction inosine + H2O = hypoxanthine + D-ribose. The enzyme catalyses xanthosine + H2O = D-ribose + xanthine. Involved in pyrimidine breakdown, especially in response to dark stress. In the presence of URH1, exhibits efficient inosine and xanthosine hydrolytic activities. Support inosine breakdown especially during the late phase of senescence. This Arabidopsis thaliana (Mouse-ear cress) protein is Probable uridine nucleosidase 2.